The following is a 138-amino-acid chain: Molluscan insulin-related peptide 5 (138 aa).

An N-terminal signal peptide occupies residues 1-31 (MAGVRLVFTKAFMVTVLLTLLLNIGVKPAEG). Residue Gln32 is modified to Pyrrolidone carboxylic acid. Disulfide bonds link Cys48–Cys124, Cys60–Cys137, and Cys123–Cys128. Positions 72–84 (DAETGWLLPETMV) are cleaved as a propeptide — C-beta peptide like. Positions 87–111 (NAQTDLDDPLRNIKLSSESALTYLT) are cleaved as a propeptide — C-alpha peptide like. Gln114 carries the pyrrolidone carboxylic acid modification.

Belongs to the insulin family. In terms of assembly, heterodimer of a B chain and an A chain linked by two disulfide bonds. As to expression, expressed in the cerebral light-green cells which are giant neuroendocrines cells involved in the control of growth.

It localises to the cytoplasmic vesicle. It is found in the secretory vesicle. The chain is Molluscan insulin-related peptide 5 from Lymnaea stagnalis (Great pond snail).